Reading from the N-terminus, the 228-residue chain is uncharacterized protein (228 aa).

In terms of domain architecture, Response regulatory spans 5–119 (HILIVEDEEK…ELLARIRAAL (115 aa)). Asp54 bears the 4-aspartylphosphate mark. A DNA-binding region (ompR/PhoB-type) is located at residues 130–228 (GTFLTYDDLR…IRGVGYAIKG (99 aa)).

In terms of processing, phosphorylated by YkoH.

It is found in the cytoplasm. Functionally, probable member of the two-component regulatory system YkoH/YkoG. This is an uncharacterized protein from Bacillus subtilis (strain 168).